The primary structure comprises 274 residues: MEEEGYQWARRCGNNAVEDPFVYEPPLFFLPQDQHHMHGLMPNEDFIANKFVTSTLYSGPRIQDIANALALVEPLTHPVREISKSTVPLLERSTLSKVDRYTLKVKNNSNGMCDDGYKWRKYGQKSIKNSPNPRSYYKCTNPICNAKKQVERSIDESNTYIITYEGFHFHYTYPFFLPDKTRQWPNKKTKIHKHNAQDMNKKSQTQEESKEAQLGELTNQNHPVNKAQENTPANLEEGLFFPVDQCRPQQGLLEDVVAPAMKNIPTRDSVLTAS.

The WRKY DNA-binding region spans 108-173 (NSNGMCDDGY…YEGFHFHYTY (66 aa)). The disordered stretch occupies residues 188–228 (KTKIHKHNAQDMNKKSQTQEESKEAQLGELTNQNHPVNKAQ). Residues 193-222 (KHNAQDMNKKSQTQEESKEAQLGELTNQNH) adopt a coiled-coil conformation. Positions 195–213 (NAQDMNKKSQTQEESKEAQ) are enriched in basic and acidic residues. Polar residues predominate over residues 216 to 228 (ELTNQNHPVNKAQ).

The protein belongs to the WRKY group II-c family.

Its subcellular location is the nucleus. In terms of biological role, transcription factor. Interacts specifically with the W box (5'-(T)TGAC[CT]-3'), a frequently occurring elicitor-responsive cis-acting element. The sequence is that of Probable WRKY transcription factor 49 (WRKY49) from Arabidopsis thaliana (Mouse-ear cress).